Here is a 243-residue protein sequence, read N- to C-terminus: Zinc import ATP-binding protein ZnuC (243 aa).

The 216-residue stretch at 4–219 (IAAHHLAVRR…PEYRALFGHG (216 aa)) folds into the ABC transporter domain. 36–43 (GPNGSGKS) contributes to the ATP binding site.

The protein belongs to the ABC transporter superfamily. Zinc importer (TC 3.A.1.15.5) family. The complex is composed of two ATP-binding proteins (ZnuC), two transmembrane proteins (ZnuB) and a solute-binding protein (ZnuA).

The protein resides in the cell inner membrane. It carries out the reaction Zn(2+)(out) + ATP(in) + H2O(in) = Zn(2+)(in) + ADP(in) + phosphate(in) + H(+)(in). In terms of biological role, part of the ABC transporter complex ZnuABC involved in zinc import. Responsible for energy coupling to the transport system. The protein is Zinc import ATP-binding protein ZnuC of Cereibacter sphaeroides (strain ATCC 17023 / DSM 158 / JCM 6121 / CCUG 31486 / LMG 2827 / NBRC 12203 / NCIMB 8253 / ATH 2.4.1.) (Rhodobacter sphaeroides).